Consider the following 1048-residue polypeptide: Protein argonaute 7 (1048 aa).

The segment covering 1 to 14 (MEGEREGVVAKNED) has biased composition (basic and acidic residues). Disordered stretches follow at residues 1-50 (MEGE…GSSG) and 121-141 (KAAD…KKPP). The span at 16 to 37 (AGGGGGGLGTGGNGGGGGGGSA) shows a compositional bias: gly residues. Over residues 131–141 (MWKHRPSKKPP) the composition is skewed to basic residues. The region spanning 422–530 (KRCDFLKDLP…VPMELCVVCE (109 aa)) is the PAZ domain. In terms of domain architecture, Piwi spans 709-1017 (LLICVMERRH…AAYRGRLYLE (309 aa)).

This sequence belongs to the argonaute family. Ago subfamily. In terms of tissue distribution, expressed in the reproductive shoot apex.

In terms of biological role, involved in the RNA silencing pathway. May bind to short RNAs such as microRNAs (miRNAs) or short interfering RNAs (siRNAs), and represses the translation of mRNAs which are complementary to them. Regulates shoot apical meristem (SAM) initiation and maintenance and leaf polarization through the trans-acting siRNAS (ta-siRNAs) pathway which probably modulates the expression of the ARF2, ARF3, ARF4, ARF14 and ARF15 genes. This chain is Protein argonaute 7 (AGO7), found in Oryza sativa subsp. japonica (Rice).